The chain runs to 96 residues: Large ribosomal subunit protein eL14 (96 aa).

This sequence belongs to the eukaryotic ribosomal protein eL14 family.

The chain is Large ribosomal subunit protein eL14 from Sulfurisphaera tokodaii (strain DSM 16993 / JCM 10545 / NBRC 100140 / 7) (Sulfolobus tokodaii).